A 338-amino-acid polypeptide reads, in one-letter code: Lipoate-protein ligase A (338 aa).

The 188-residue stretch at 29-216 (PATQRVLFLW…AFFAHYGERV (188 aa)) folds into the BPL/LPL catalytic domain. ATP-binding positions include Arg71, 76–79 (GAVF), and Lys134. Lys134 is a binding site for (R)-lipoate.

Belongs to the LplA family. Monomer.

The protein localises to the cytoplasm. It carries out the reaction L-lysyl-[lipoyl-carrier protein] + (R)-lipoate + ATP = N(6)-[(R)-lipoyl]-L-lysyl-[lipoyl-carrier protein] + AMP + diphosphate + H(+). Its pathway is protein modification; protein lipoylation via exogenous pathway; protein N(6)-(lipoyl)lysine from lipoate: step 1/2. It participates in protein modification; protein lipoylation via exogenous pathway; protein N(6)-(lipoyl)lysine from lipoate: step 2/2. Catalyzes both the ATP-dependent activation of exogenously supplied lipoate to lipoyl-AMP and the transfer of the activated lipoyl onto the lipoyl domains of lipoate-dependent enzymes. This chain is Lipoate-protein ligase A, found in Escherichia coli O157:H7.